Reading from the N-terminus, the 591-residue chain is Protein CBFA2T3 (591 aa).

The tract at residues methionine 1–glutamine 105 is disordered. The tract at residues methionine 1–isoleucine 381 is mediates localization to the nucleus. The segment covering serine 41–alanine 52 has biased composition (pro residues). Over residues glutamine 55–glutamine 105 the composition is skewed to polar residues. The TAFH domain occupies alanine 112–glutamate 207. Disordered stretches follow at residues leucine 226 to histidine 291 and aspartate 386 to proline 420. A compositionally biased stretch (basic and acidic residues) spans glutamate 230–serine 256. Polar residues predominate over residues serine 263 to leucine 274. Residues asparagine 279–glutamine 290 are compositionally biased toward pro residues. Residues serine 394–proline 410 show a composition bias toward low complexity. Positions arginine 433–leucine 488 form a coiled coil. Residues cysteine 501, cysteine 504, cysteine 512, cysteine 515, cysteine 521, cysteine 525, histidine 533, and cysteine 537 each coordinate Zn(2+). The MYND-type zinc finger occupies cysteine 501–cysteine 537. Residues serine 548 to arginine 591 form a disordered region. A compositionally biased stretch (low complexity) spans proline 560–proline 585.

The protein belongs to the CBFA2T family.

It localises to the nucleus. It is found in the nucleolus. The protein localises to the nucleoplasm. Its subcellular location is the golgi apparatus. Functions as a transcriptional repressor. Regulates the proliferation and the differentiation of erythroid progenitors. Plays a role in granulocyte differentiation. May also function as an A-kinase-anchoring protein. The protein is Protein CBFA2T3 (CBFA2T3) of Gallus gallus (Chicken).